Here is a 292-residue protein sequence, read N- to C-terminus: Ribosome-inactivating protein saporin-2 (292 aa).

The N-terminal stretch at 1-24 (MKIYVVATIAWILLQFSAWTTTDA) is a signal peptide. The active site involves glutamate 200.

Belongs to the ribosome-inactivating protein family. Type 1 RIP subfamily.

The catalysed reaction is Endohydrolysis of the N-glycosidic bond at one specific adenosine on the 28S rRNA.. Its function is as follows. Ribosome-inactivating protein of type 1, inhibits protein synthesis in animal cells. Useful as immunotoxin for pharmacological applications. The chain is Ribosome-inactivating protein saporin-2 (SAP2) from Saponaria officinalis (Common soapwort).